The sequence spans 71 residues: Antitoxin VapB22 (71 aa).

Belongs to the phD/YefM antitoxin family.

Its function is as follows. Antitoxin component of a type II toxin-antitoxin (TA) system. Upon expression in M.smegmatis neutralizes the effect of cognate toxin VapC22. The protein is Antitoxin VapB22 (vapB22) of Mycobacterium tuberculosis (strain ATCC 25618 / H37Rv).